The chain runs to 313 residues: tRNA dimethylallyltransferase (313 aa).

Residue glycine 10–threonine 17 participates in ATP binding. Residue threonine 12 to threonine 17 coordinates substrate. Interaction with substrate tRNA stretches follow at residues aspartate 35–methionine 38, glutamine 159–arginine 163, and arginine 240–arginine 245.

Belongs to the IPP transferase family. As to quaternary structure, monomer. Mg(2+) serves as cofactor.

It carries out the reaction adenosine(37) in tRNA + dimethylallyl diphosphate = N(6)-dimethylallyladenosine(37) in tRNA + diphosphate. Functionally, catalyzes the transfer of a dimethylallyl group onto the adenine at position 37 in tRNAs that read codons beginning with uridine, leading to the formation of N6-(dimethylallyl)adenosine (i(6)A). The sequence is that of tRNA dimethylallyltransferase from Legionella pneumophila subsp. pneumophila (strain Philadelphia 1 / ATCC 33152 / DSM 7513).